Reading from the N-terminus, the 226-residue chain is Urease accessory protein UreF (226 aa).

Belongs to the UreF family. In terms of assembly, ureD, UreF and UreG form a complex that acts as a GTP-hydrolysis-dependent molecular chaperone, activating the urease apoprotein by helping to assemble the nickel containing metallocenter of UreC. The UreE protein probably delivers the nickel.

It localises to the cytoplasm. Functionally, required for maturation of urease via the functional incorporation of the urease nickel metallocenter. This Janthinobacterium sp. (strain Marseille) (Minibacterium massiliensis) protein is Urease accessory protein UreF.